Consider the following 213-residue polypeptide: ATP synthase peripheral stalk subunit OSCP, mitochondrial (213 aa).

The transit peptide at 1–23 (MAALAVSGLSQQVRCFSTSVVRP) directs the protein to the mitochondrion. Positions 5–23 (AVSGLSQQVRCFSTSVVRP) match the SIFI-degron motif. Lys54, Lys60, Lys70, and Lys73 each carry N6-acetyllysine. Lys90 is modified (N6-succinyllysine). N6-acetyllysine; alternate occurs at positions 100, 158, and 162. N6-succinyllysine; alternate occurs at positions 100, 158, and 162. Residues Lys172, Lys176, and Lys192 each carry the N6-acetyllysine modification. Lys199 is modified (N6-succinyllysine).

This sequence belongs to the ATPase delta chain family. Component of the ATP synthase complex composed at least of ATP5F1A/subunit alpha, ATP5F1B/subunit beta, ATP5MC1/subunit c (homooctomer), MT-ATP6/subunit a, MT-ATP8/subunit 8, ATP5ME/subunit e, ATP5MF/subunit f, ATP5MG/subunit g, ATP5MK/subunit k, ATP5MJ/subunit j, ATP5F1C/subunit gamma, ATP5F1D/subunit delta, ATP5F1E/subunit epsilon, ATP5PF/subunit F6, ATP5PB/subunit b, ATP5PD/subunit d, ATP5PO/subunit OSCP. ATP synthase complex consists of a soluble F(1) head domain (subunits alpha(3) and beta(3)) - the catalytic core - and a membrane F(0) domain - the membrane proton channel (subunits c, a, 8, e, f, g, k and j). These two domains are linked by a central stalk (subunits gamma, delta, and epsilon) rotating inside the F1 region and a stationary peripheral stalk (subunits F6, b, d, and OSCP). In terms of processing, acetylation at Lys-162 decreases ATP production. Deacetylated by SIRT3. Post-translationally, in response to mitochondrial stress, the precursor protein is ubiquitinated by the SIFI complex in the cytoplasm before mitochondrial import, leading to its degradation. Within the SIFI complex, UBR4 initiates ubiquitin chain that are further elongated or branched by KCMF1.

Its subcellular location is the mitochondrion. It is found in the mitochondrion inner membrane. Subunit OSCP, of the mitochondrial membrane ATP synthase complex (F(1)F(0) ATP synthase or Complex V) that produces ATP from ADP in the presence of a proton gradient across the membrane which is generated by electron transport complexes of the respiratory chain. ATP synthase complex consist of a soluble F(1) head domain - the catalytic core - and a membrane F(1) domain - the membrane proton channel. These two domains are linked by a central stalk rotating inside the F(1) region and a stationary peripheral stalk. During catalysis, ATP synthesis in the catalytic domain of F(1) is coupled via a rotary mechanism of the central stalk subunits to proton translocation. In vivo, can only synthesize ATP although its ATP hydrolase activity can be activated artificially in vitro. Part of the complex F(0) domain. Part of the complex F(0) domain and the peripheric stalk, which acts as a stator to hold the catalytic alpha(3)beta(3) subcomplex and subunit a/ATP6 static relative to the rotary elements. In Bos taurus (Bovine), this protein is ATP synthase peripheral stalk subunit OSCP, mitochondrial.